Consider the following 107-residue polypeptide: C-X-C motif chemokine 3 (107 aa).

The signal sequence occupies residues 1–34 (MAHATLSAAPSNPRLLRVALLLLLLVAASRRAAG). Cystine bridges form between Cys43–Cys69 and Cys45–Cys85.

The protein belongs to the intercrine alpha (chemokine CxC) family. Post-translationally, N-terminal processed form GRO-gamma(5-73) is produced by proteolytic cleavage after secretion from peripheral blood monocytes.

It is found in the secreted. Its function is as follows. Ligand for CXCR2. Has chemotactic activity for neutrophils. May play a role in inflammation and exert its effects on endothelial cells in an autocrine fashion. In vitro, the processed form GRO-gamma(5-73) shows a fivefold higher chemotactic activity for neutrophilic granulocytes. This is C-X-C motif chemokine 3 (CXCL3) from Homo sapiens (Human).